Here is a 184-residue protein sequence, read N- to C-terminus: Oocyte-secreted protein 4A (184 aa).

The first 19 residues, 1-19 (MKISCVLGKLLMLFELIHG), serve as a signal peptide directing secretion. Asn128 carries N-linked (GlcNAc...) asparagine glycosylation.

The protein belongs to the PLAC1 family.

The protein resides in the secreted. This Homo sapiens (Human) protein is Oocyte-secreted protein 4A.